A 120-amino-acid polypeptide reads, in one-letter code: Large ribosomal subunit protein uL18 (120 aa).

This sequence belongs to the universal ribosomal protein uL18 family. Part of the 50S ribosomal subunit; part of the 5S rRNA/L5/L18/L25 subcomplex. Contacts the 5S and 23S rRNAs.

In terms of biological role, this is one of the proteins that bind and probably mediate the attachment of the 5S RNA into the large ribosomal subunit, where it forms part of the central protuberance. The sequence is that of Large ribosomal subunit protein uL18 from Methylorubrum extorquens (strain CM4 / NCIMB 13688) (Methylobacterium extorquens).